Reading from the N-terminus, the 132-residue chain is Small ribosomal subunit protein uS8 (132 aa).

This sequence belongs to the universal ribosomal protein uS8 family. Part of the 30S ribosomal subunit. Contacts proteins S5 and S12.

In terms of biological role, one of the primary rRNA binding proteins, it binds directly to 16S rRNA central domain where it helps coordinate assembly of the platform of the 30S subunit. The chain is Small ribosomal subunit protein uS8 from Geobacter sulfurreducens (strain ATCC 51573 / DSM 12127 / PCA).